Consider the following 406-residue polypeptide: MKVTNASLLALLLPAVSGRFVETGEPDRSILYPDGLPQPTETGEKYHIELSPGDTRWVTEDEKWELRRSGKRFFDITDHPDLGALRAMTASRKKSVFPEKPKYQKELKPFLAELSKTEMEDHLTTFTSFHTRYYKSDYGRQSSEWLLKQVRDTIEKAGADKHVRAEHFKHPWGQNSIIATIPGKTNATVVIGAHQDSINLWLPSVLAAPGADDDGSGTVTILEAFRVILQSEDIVKGNHENTLEFHWYSAEEGGLLGSQAIFSSYEKEGRDVKAMLQQDMTGFITRTLDAGKPESVGVIVDFVDPNLTQFIKVVIDEYCSIPYVETKCGYACSDHASASKAGYPSAFVIESAFEYSDNHIHSTEDLIKYLSFDHMLQHARMTLAFGYELAFTDFAALEKPDHSDSL.

Positions Met1–Gly18 are cleaved as a signal peptide. Positions Arg19 to Lys94 are excised as a propeptide. A glycan (N-linked (GlcNAc...) asparagine) is linked at Asn186. Positions 194, 213, 252, and 279 each coordinate Zn(2+). Asn306 carries N-linked (GlcNAc...) asparagine glycosylation. Cys328 and Cys332 are oxidised to a cystine. His361 is a binding site for Zn(2+).

It belongs to the peptidase M28 family. M28E subfamily. In terms of assembly, monomer. Requires Zn(2+) as cofactor.

It is found in the secreted. Its function is as follows. Extracellular aminopeptidase that allows assimilation of proteinaceous substrates. The polypeptide is Leucine aminopeptidase 1 (LAP1) (Chaetomium globosum (strain ATCC 6205 / CBS 148.51 / DSM 1962 / NBRC 6347 / NRRL 1970) (Soil fungus)).